The chain runs to 241 residues: UDP-2,3-diacylglucosamine hydrolase (241 aa).

Mn(2+) contacts are provided by aspartate 9, histidine 11, aspartate 42, asparagine 79, and histidine 114. 79–80 (NR) contacts substrate. Residues aspartate 122, serine 160, asparagine 164, lysine 167, and histidine 195 each contribute to the substrate site. Mn(2+) contacts are provided by histidine 195 and histidine 197.

It belongs to the LpxH family. The cofactor is Mn(2+).

Its subcellular location is the cell inner membrane. The catalysed reaction is UDP-2-N,3-O-bis[(3R)-3-hydroxytetradecanoyl]-alpha-D-glucosamine + H2O = 2-N,3-O-bis[(3R)-3-hydroxytetradecanoyl]-alpha-D-glucosaminyl 1-phosphate + UMP + 2 H(+). It participates in glycolipid biosynthesis; lipid IV(A) biosynthesis; lipid IV(A) from (3R)-3-hydroxytetradecanoyl-[acyl-carrier-protein] and UDP-N-acetyl-alpha-D-glucosamine: step 4/6. Its function is as follows. Hydrolyzes the pyrophosphate bond of UDP-2,3-diacylglucosamine to yield 2,3-diacylglucosamine 1-phosphate (lipid X) and UMP by catalyzing the attack of water at the alpha-P atom. Involved in the biosynthesis of lipid A, a phosphorylated glycolipid that anchors the lipopolysaccharide to the outer membrane of the cell. The polypeptide is UDP-2,3-diacylglucosamine hydrolase (Shewanella frigidimarina (strain NCIMB 400)).